The chain runs to 196 residues: MKESIAKVYRKTGETEIKSEINLYGEGKYDIKTGIGFFDHMLNLMARHGLIDVKLEAKGDLQVDSHHTVEDVGIVLGESFKKALGDKKGIKRYGTSFVPMDEALASVSIDISGRPYIVCDFNFTVDKLGGMDTELVEEFLRALAFNVGITLHARVLYGKNNHHMIEAVFKALGRALREAVDRDEKINGVMSTKGTL.

Belongs to the imidazoleglycerol-phosphate dehydratase family.

Its subcellular location is the cytoplasm. The enzyme catalyses D-erythro-1-(imidazol-4-yl)glycerol 3-phosphate = 3-(imidazol-4-yl)-2-oxopropyl phosphate + H2O. It functions in the pathway amino-acid biosynthesis; L-histidine biosynthesis; L-histidine from 5-phospho-alpha-D-ribose 1-diphosphate: step 6/9. The chain is Imidazoleglycerol-phosphate dehydratase from Clostridium botulinum (strain Kyoto / Type A2).